A 106-amino-acid chain; its full sequence is Nucleoid-associated protein RPB_0667 (106 aa).

The protein belongs to the YbaB/EbfC family. As to quaternary structure, homodimer.

The protein resides in the cytoplasm. Its subcellular location is the nucleoid. Functionally, binds to DNA and alters its conformation. May be involved in regulation of gene expression, nucleoid organization and DNA protection. This chain is Nucleoid-associated protein RPB_0667, found in Rhodopseudomonas palustris (strain HaA2).